An 877-amino-acid chain; its full sequence is Translation initiation factor IF-2 (877 aa).

The interval 48–289 (SSFQNSAPAE…QITKRKERPL (242 aa)) is disordered. Positions 78–89 (RKNEKKPEENNT) are enriched in basic and acidic residues. The segment covering 92-101 (KSNRRRNNKR) has biased composition (basic residues). The span at 102-116 (RSSDRARDNKERDAK) shows a compositional bias: basic and acidic residues. The segment covering 123-132 (KAAALLQQFK) has biased composition (low complexity). 2 stretches are compositionally biased toward basic and acidic residues: residues 135–155 (QRAE…EYHE) and 162–189 (KEQS…EKKV). A compositionally biased stretch (basic residues) spans 277–286 (PRKQITKRKE). The tr-type G domain maps to 378–547 (KRPPVVTIMG…LLQADVMELK (170 aa)). Residues 387 to 394 (GHVDHGKT) are G1. 387–394 (GHVDHGKT) serves as a coordination point for GTP. The G2 stretch occupies residues 412–416 (GITQR). The G3 stretch occupies residues 433–436 (DTPG). GTP-binding positions include 433–437 (DTPGH) and 487–490 (NKMD). The tract at residues 487–490 (NKMD) is G4. A G5 region spans residues 523–525 (SAK).

The protein belongs to the TRAFAC class translation factor GTPase superfamily. Classic translation factor GTPase family. IF-2 subfamily.

The protein localises to the cytoplasm. In terms of biological role, one of the essential components for the initiation of protein synthesis. Protects formylmethionyl-tRNA from spontaneous hydrolysis and promotes its binding to the 30S ribosomal subunits. Also involved in the hydrolysis of GTP during the formation of the 70S ribosomal complex. This chain is Translation initiation factor IF-2, found in Lactobacillus acidophilus (strain ATCC 700396 / NCK56 / N2 / NCFM).